A 126-amino-acid polypeptide reads, in one-letter code: Chorion class B protein M1768 (126 aa).

The segment at 1–17 (YGGLGYGGLGGGCGRGF) is left arm. The central domain stretch occupies residues 18–86 (SGGGLPVATA…GNGAVGITRE (69 aa)). The right arm (Gly-rich tandem repeats) stretch occupies residues 87–126 (GGFGYGAGYGDGYGLGFGGYGGGYGLGYGGYGGCGCSWGY).

It belongs to the chorion protein family.

Its function is as follows. This protein is one of many from the eggshell of the silk moth. The polypeptide is Chorion class B protein M1768 (Bombyx mori (Silk moth)).